The sequence spans 109 residues: Nucleoid-associated protein BCE_0021 (109 aa).

This sequence belongs to the YbaB/EbfC family. In terms of assembly, homodimer.

The protein resides in the cytoplasm. Its subcellular location is the nucleoid. Binds to DNA and alters its conformation. May be involved in regulation of gene expression, nucleoid organization and DNA protection. In Bacillus cereus (strain ATCC 10987 / NRS 248), this protein is Nucleoid-associated protein BCE_0021.